A 693-amino-acid polypeptide reads, in one-letter code: tRNA (guanine(37)-N(1))-methyltransferase (693 aa).

S-adenosyl-L-methionine is bound by residues Arg-327, 365–366, and 392–393; these read DI and DA. The interval 497–572 is disordered; sequence AGDSHQSNSH…QKAEDAPTNE (76 aa). Residues 500 to 512 show a composition bias toward low complexity; sequence SHQSNSHQSNPHE. Position 591 (Asn-591) interacts with S-adenosyl-L-methionine.

This sequence belongs to the class I-like SAM-binding methyltransferase superfamily. TRM5/TYW2 family. As to quaternary structure, monomer.

The protein resides in the mitochondrion matrix. It localises to the nucleus. It is found in the cytoplasm. The catalysed reaction is guanosine(37) in tRNA + S-adenosyl-L-methionine = N(1)-methylguanosine(37) in tRNA + S-adenosyl-L-homocysteine + H(+). Specifically methylates the N1 position of guanosine-37 in various cytoplasmic and mitochondrial tRNAs. Methylation is not dependent on the nature of the nucleoside 5' of the target nucleoside. This is the first step in the biosynthesis of wybutosine (yW), a modified base adjacent to the anticodon of tRNAs and required for accurate decoding. This is tRNA (guanine(37)-N(1))-methyltransferase from Plasmodium vivax (strain Salvador I).